The chain runs to 231 residues: tRNA (guanine-N(1)-)-methyltransferase (231 aa).

Residues glycine 112 and 132–137 (LGDFVL) each bind S-adenosyl-L-methionine.

The protein belongs to the RNA methyltransferase TrmD family. Homodimer.

It localises to the cytoplasm. It catalyses the reaction guanosine(37) in tRNA + S-adenosyl-L-methionine = N(1)-methylguanosine(37) in tRNA + S-adenosyl-L-homocysteine + H(+). Functionally, specifically methylates guanosine-37 in various tRNAs. The sequence is that of tRNA (guanine-N(1)-)-methyltransferase from Gloeothece citriformis (strain PCC 7424) (Cyanothece sp. (strain PCC 7424)).